The primary structure comprises 664 residues: Probable L-type lectin-domain containing receptor kinase V.3 (664 aa).

The signal sequence occupies residues 1–26 (MSMSCKINWLMVLVIIALSNLESSLG). The Extracellular segment spans residues 27–278 (RLVFEGSAGL…YPKAESQVKL (252 aa)). The tract at residues 28–250 (LVFEGSAGLM…AIHYMWMWYV (223 aa)) is legume-lectin like. 5 N-linked (GlcNAc...) asparagine glycosylation sites follow: asparagine 69, asparagine 116, asparagine 122, asparagine 174, and asparagine 197. A helical transmembrane segment spans residues 279-299 (IVLVTFLTLALFVALAASALI). Topologically, residues 300-664 (VFFYKRHKKL…LPSGRPRLFL (365 aa)) are cytoplasmic. A Protein kinase domain is found at 335–617 (NGFKQLLGEG…GVSELPDNLL (283 aa)). Residues 341–349 (LGEGGFGPV) and lysine 364 contribute to the ATP site. Aspartate 461 (proton acceptor) is an active-site residue.

This sequence in the C-terminal section; belongs to the protein kinase superfamily. Ser/Thr protein kinase family. The protein in the N-terminal section; belongs to the leguminous lectin family.

Its subcellular location is the cell membrane. The catalysed reaction is L-seryl-[protein] + ATP = O-phospho-L-seryl-[protein] + ADP + H(+). It catalyses the reaction L-threonyl-[protein] + ATP = O-phospho-L-threonyl-[protein] + ADP + H(+). The sequence is that of Probable L-type lectin-domain containing receptor kinase V.3 (LECRK53) from Arabidopsis thaliana (Mouse-ear cress).